A 336-amino-acid chain; its full sequence is L-Ala-D/L-amino acid epimerase (336 aa).

Substrate-binding positions include Thr-130 and 152 to 154; that span reads KIK. Residues Asp-178, Glu-204, and Asp-229 each contribute to the Mg(2+) site. Residues Lys-251 and 301–303 contribute to the substrate site; that span reads DMD.

This sequence belongs to the mandelate racemase/muconate lactonizing enzyme family. Requires Mg(2+) as cofactor.

Functionally, catalyzes the epimerization of D-Ala-D-Ala to D-Ala-L-Ala. Has broad substrate specificity and catalyzes the epimerization of a variety of dipeptides containing an N-terminal Ala followed by Ser, Thr, Val, Met, His, Phe or Trp (in vitro). The protein is L-Ala-D/L-amino acid epimerase of Flavobacterium johnsoniae (strain ATCC 17061 / DSM 2064 / JCM 8514 / BCRC 14874 / CCUG 350202 / NBRC 14942 / NCIMB 11054 / UW101) (Cytophaga johnsonae).